The chain runs to 387 residues: tRNA pseudouridine synthase B (387 aa).

The active-site Nucleophile is aspartate 43.

It belongs to the pseudouridine synthase TruB family. Type 1 subfamily.

It catalyses the reaction uridine(55) in tRNA = pseudouridine(55) in tRNA. Functionally, responsible for synthesis of pseudouridine from uracil-55 in the psi GC loop of transfer RNAs. In Bifidobacterium longum (strain NCC 2705), this protein is tRNA pseudouridine synthase B.